Reading from the N-terminus, the 182-residue chain is MIELLLLSLALSMDAFAVSLGLGARFGYNKRESLRPALSFGIFQGIMPLLGFFVGVTFIAFISAFDHYLAFGILALIGAKMIYEGLSQSEEERLDELSHRTLLILSIATSIDALAAGVSLHLIDVNVFLSCTIIAFTTFLLSYLGVLWGKRAGEQCKRGAEILGGVILIGIGSKILLEHLFF.

Transmembrane regions (helical) follow at residues 4–24 (LLLL…GLGA), 42–62 (IFQG…IAFI), 63–83 (SAFD…KMIY), 103–123 (LILS…LHLI), 127–147 (VFLS…LGVL), and 162–182 (ILGG…HLFF).

This sequence belongs to the MntP (TC 9.B.29) family.

The protein resides in the cell inner membrane. Its function is as follows. Probably functions as a manganese efflux pump. The chain is Putative manganese efflux pump MntP 1 from Wolinella succinogenes (strain ATCC 29543 / DSM 1740 / CCUG 13145 / JCM 31913 / LMG 7466 / NCTC 11488 / FDC 602W) (Vibrio succinogenes).